The chain runs to 248 residues: Triosephosphate isomerase (248 aa).

Substrate is bound by residues Asn-11 and Lys-13. The Electrophile role is filled by His-95. The Proton acceptor role is filled by Glu-165.

The protein belongs to the triosephosphate isomerase family. As to quaternary structure, homodimer.

The protein localises to the cytoplasm. It carries out the reaction D-glyceraldehyde 3-phosphate = dihydroxyacetone phosphate. The enzyme catalyses dihydroxyacetone phosphate = methylglyoxal + phosphate. It functions in the pathway carbohydrate degradation; glycolysis; D-glyceraldehyde 3-phosphate from glycerone phosphate: step 1/1. Its pathway is carbohydrate biosynthesis; gluconeogenesis. Its function is as follows. Triosephosphate isomerase is an extremely efficient metabolic enzyme that catalyzes the interconversion between dihydroxyacetone phosphate (DHAP) and D-glyceraldehyde-3-phosphate (G3P) in glycolysis and gluconeogenesis. Functionally, it is also responsible for the non-negligible production of methylglyoxal a reactive cytotoxic side-product that modifies and can alter proteins, DNA and lipids. The protein is Triosephosphate isomerase (tpi1) of Oryzias latipes (Japanese rice fish).